The primary structure comprises 362 residues: Chorismate synthase (362 aa).

Residue arginine 47 participates in NADP(+) binding. Residues 124-126 (RSS), glycine 286, 301-305 (KPTAT), and arginine 327 contribute to the FMN site.

Belongs to the chorismate synthase family. Homotetramer. FMNH2 serves as cofactor.

It catalyses the reaction 5-O-(1-carboxyvinyl)-3-phosphoshikimate = chorismate + phosphate. Its pathway is metabolic intermediate biosynthesis; chorismate biosynthesis; chorismate from D-erythrose 4-phosphate and phosphoenolpyruvate: step 7/7. Its function is as follows. Catalyzes the anti-1,4-elimination of the C-3 phosphate and the C-6 proR hydrogen from 5-enolpyruvylshikimate-3-phosphate (EPSP) to yield chorismate, which is the branch point compound that serves as the starting substrate for the three terminal pathways of aromatic amino acid biosynthesis. This reaction introduces a second double bond into the aromatic ring system. The sequence is that of Chorismate synthase from Gloeothece citriformis (strain PCC 7424) (Cyanothece sp. (strain PCC 7424)).